The primary structure comprises 370 residues: tRNA-specific 2-thiouridylase MnmA (370 aa).

Residues 10 to 17 (AMSGGVDS) and M36 each bind ATP. The active-site Nucleophile is C111. Cysteines 111 and 209 form a disulfide. G135 is an ATP binding site. The tract at residues 159–161 (KDQ) is interaction with tRNA. The active-site Cysteine persulfide intermediate is the C209.

The protein belongs to the MnmA/TRMU family.

It is found in the cytoplasm. It catalyses the reaction S-sulfanyl-L-cysteinyl-[protein] + uridine(34) in tRNA + AH2 + ATP = 2-thiouridine(34) in tRNA + L-cysteinyl-[protein] + A + AMP + diphosphate + H(+). Functionally, catalyzes the 2-thiolation of uridine at the wobble position (U34) of tRNA, leading to the formation of s(2)U34. This is tRNA-specific 2-thiouridylase MnmA from Koribacter versatilis (strain Ellin345).